The sequence spans 351 residues: Serine/threonine-protein kinase ZRK1 (351 aa).

The Protein kinase domain occupies 60–347; it reads FDSSCFVSQD…KELKQIEASL (288 aa). ATP is bound by residues 66–74 and Lys-87; that span reads VSQDVYYKW. Asp-191 serves as the catalytic Proton acceptor.

It belongs to the protein kinase superfamily. Ser/Thr protein kinase family. ZRK subfamily. As to quaternary structure, component of a stable high-order oligomeric complex made of RKS1 and RPP13L4/ZAR1 which recruits Xanthomonas campestris effector XopAC/AvrAC-mediated uridylylated PBL2 in the presence of ATP to form a wheel-like pentameric resistosome; this complex triggers immunity toward X.campestris in vascular tissues. Interacts with RPP13L4/ZAR1 and uridylylated PBL2. In terms of tissue distribution, expressed at high levels in germinating seeds and at lower levels in adult leaves.

It carries out the reaction L-seryl-[protein] + ATP = O-phospho-L-seryl-[protein] + ADP + H(+). It catalyses the reaction L-threonyl-[protein] + ATP = O-phospho-L-threonyl-[protein] + ADP + H(+). Its function is as follows. Serine/threonine-protein kinase that confers a broad-spectrum quantitative disease resistance (QDR) to the pathogenic biotrophic bacteria Xanthomonas campestris (e.g. pv. campestris (Xcc), pv. raphani, pv. armoriaceae and pv. incanae) by restricting bacterial spread to the vascular system from the infection site; X.campestris causes black rot disease in crops. Seems to not have any kinase activity. In Arabidopsis thaliana (Mouse-ear cress), this protein is Serine/threonine-protein kinase ZRK1.